Here is a 375-residue protein sequence, read N- to C-terminus: Histidine biosynthesis bifunctional protein HisB (375 aa).

The tract at residues 1–168 is histidinol-phosphatase; that stretch reads MTPILFVDRD…GIAHELADAP (168 aa). The active-site Nucleophile is Asp8. Mg(2+)-binding residues include Asp8, Asp10, and Asp128. Asp10 serves as the catalytic Proton donor. The segment at 169–375 is imidazoleglycerol-phosphate dehydratase; that stretch reads RRAVVQRNTK…TALPSTKGAL (207 aa).

The protein in the N-terminal section; belongs to the histidinol-phosphatase family. In the C-terminal section; belongs to the imidazoleglycerol-phosphate dehydratase family. It depends on Mg(2+) as a cofactor.

The protein localises to the cytoplasm. The catalysed reaction is D-erythro-1-(imidazol-4-yl)glycerol 3-phosphate = 3-(imidazol-4-yl)-2-oxopropyl phosphate + H2O. It catalyses the reaction L-histidinol phosphate + H2O = L-histidinol + phosphate. It participates in amino-acid biosynthesis; L-histidine biosynthesis; L-histidine from 5-phospho-alpha-D-ribose 1-diphosphate: step 6/9. It functions in the pathway amino-acid biosynthesis; L-histidine biosynthesis; L-histidine from 5-phospho-alpha-D-ribose 1-diphosphate: step 8/9. The chain is Histidine biosynthesis bifunctional protein HisB from Xanthomonas campestris pv. campestris (strain B100).